The chain runs to 652 residues: Beta-mannosyltransferase 1 (652 aa).

Residues 1 to 15 lie on the Cytoplasmic side of the membrane; sequence MVDLFQWLKFYSMRR. A helical transmembrane segment spans residues 16–34; sequence LGQVAITLVLLNLFVFLGY. Residues 35–652 lie on the Extracellular side of the membrane; it reads KFTPSTVIGS…LYQLQEEERS (618 aa). The N-linked (GlcNAc...) asparagine glycan is linked to N57. A coiled-coil region spans residues 535-652; sequence PARYAKQMEN…LYQLQEEERS (118 aa). The tract at residues 536–621 is disordered; sequence ARYAKQMENE…EAKENEAKKK (86 aa).

The protein belongs to the BMT family.

Its subcellular location is the membrane. In terms of biological role, beta-mannosyltransferase involved in cell wall biosynthesis. Involved in the beta-mannosylation of outer chains of N-glycans. This is Beta-mannosyltransferase 1 (BMT1) from Komagataella phaffii (strain ATCC 76273 / CBS 7435 / CECT 11047 / NRRL Y-11430 / Wegner 21-1) (Yeast).